A 206-amino-acid chain; its full sequence is MIRATRVLGQHRWTEAAADSVLLDFDDRHRRRLAMTGTRGLAFVLDLAHATALRGGDALVLEDGRLVEVVAAAEPLLEIRASDPHHLVRLAWHLGNRHLPTQIMAKSLRIRRDHVIEAMVKGLGARVIEIEAPFDPEGGAYAEPSHAQGHDEHDHHHGHDHHHDHGGHEHAHHGHDHGHAHDDHVHDEHCGHGHHHHGHAHAHDRK.

The interval 136–206 (PEGGAYAEPS…HGHAHAHDRK (71 aa)) is disordered. 2 stretches are compositionally biased toward basic and acidic residues: residues 148-169 (QGHDEHDHHHGHDHHHDHGGHE) and 177-191 (HGHAHDDHVHDEHCG). Over residues 192 to 206 (HGHHHHGHAHAHDRK) the composition is skewed to basic residues.

This sequence belongs to the UreE family.

The protein localises to the cytoplasm. Involved in urease metallocenter assembly. Binds nickel. Probably functions as a nickel donor during metallocenter assembly. The polypeptide is Urease accessory protein UreE (Bradyrhizobium sp. (strain BTAi1 / ATCC BAA-1182)).